A 78-amino-acid polypeptide reads, in one-letter code: ATP synthase subunit a (78 aa).

A helical transmembrane segment spans residues 34 to 54 (LTNIGLYLTIGIFLILTYSLL).

The protein belongs to the ATPase A chain family. In terms of assembly, F-type ATPases have 2 components, CF(1) - the catalytic core - and CF(0) - the membrane proton channel. CF(1) has five subunits: alpha(3), beta(3), gamma(1), delta(1), epsilon(1). CF(0) has three main subunits: a, b and c.

Its subcellular location is the mitochondrion inner membrane. Functionally, mitochondrial membrane ATP synthase (F(1)F(0) ATP synthase or Complex V) produces ATP from ADP in the presence of a proton gradient across the membrane which is generated by electron transport complexes of the respiratory chain. F-type ATPases consist of two structural domains, F(1) - containing the extramembraneous catalytic core and F(0) - containing the membrane proton channel, linked together by a central stalk and a peripheral stalk. During catalysis, ATP synthesis in the catalytic domain of F(1) is coupled via a rotary mechanism of the central stalk subunits to proton translocation. Key component of the proton channel; it may play a direct role in the translocation of protons across the membrane. The chain is ATP synthase subunit a (atp6) from Aspergillus amstelodami.